The primary structure comprises 377 residues: Bifunctional enzyme IspD/IspF (377 aa).

The interval 1–221 (MTTAAIIVAA…ERILRQDMDV (221 aa)) is 2-C-methyl-D-erythritol 4-phosphate cytidylyltransferase. The tract at residues 222–377 (RLGNGYDVHR…ALATACLVKP (156 aa)) is 2-C-methyl-D-erythritol 2,4-cyclodiphosphate synthase. D228 and H230 together coordinate a divalent metal cation. 4-CDP-2-C-methyl-D-erythritol 2-phosphate is bound by residues 228 to 230 (DVH) and 254 to 255 (HS). Residue H262 coordinates a divalent metal cation. 4-CDP-2-C-methyl-D-erythritol 2-phosphate-binding positions include 276-278 (DIG), 352-355 (TTSE), F359, and R362.

The protein in the N-terminal section; belongs to the IspD/TarI cytidylyltransferase family. IspD subfamily. In the C-terminal section; belongs to the IspF family. A divalent metal cation serves as cofactor.

The enzyme catalyses 2-C-methyl-D-erythritol 4-phosphate + CTP + H(+) = 4-CDP-2-C-methyl-D-erythritol + diphosphate. It carries out the reaction 4-CDP-2-C-methyl-D-erythritol 2-phosphate = 2-C-methyl-D-erythritol 2,4-cyclic diphosphate + CMP. The protein operates within isoprenoid biosynthesis; isopentenyl diphosphate biosynthesis via DXP pathway; isopentenyl diphosphate from 1-deoxy-D-xylulose 5-phosphate: step 2/6. It functions in the pathway isoprenoid biosynthesis; isopentenyl diphosphate biosynthesis via DXP pathway; isopentenyl diphosphate from 1-deoxy-D-xylulose 5-phosphate: step 4/6. Its function is as follows. Bifunctional enzyme that catalyzes the formation of 4-diphosphocytidyl-2-C-methyl-D-erythritol from CTP and 2-C-methyl-D-erythritol 4-phosphate (MEP) (IspD), and catalyzes the conversion of 4-diphosphocytidyl-2-C-methyl-D-erythritol 2-phosphate (CDP-ME2P) to 2-C-methyl-D-erythritol 2,4-cyclodiphosphate (ME-CPP) with a corresponding release of cytidine 5-monophosphate (CMP) (IspF). This Ruegeria pomeroyi (strain ATCC 700808 / DSM 15171 / DSS-3) (Silicibacter pomeroyi) protein is Bifunctional enzyme IspD/IspF.